Reading from the N-terminus, the 1409-residue chain is DNA-directed RNA polymerase subunit beta' (1409 aa).

Zn(2+) contacts are provided by C70, C72, C85, and C88. Mg(2+)-binding residues include D458, D460, and D462. 4 residues coordinate Zn(2+): C813, C887, C894, and C897. The span at 1385 to 1403 (EAAELAGSTSDVSTTADAS) shows a compositional bias: low complexity. Residues 1385–1409 (EAAELAGSTSDVSTTADASEGAASE) are disordered.

It belongs to the RNA polymerase beta' chain family. In terms of assembly, the RNAP catalytic core consists of 2 alpha, 1 beta, 1 beta' and 1 omega subunit. When a sigma factor is associated with the core the holoenzyme is formed, which can initiate transcription. Mg(2+) is required as a cofactor. Zn(2+) serves as cofactor.

The catalysed reaction is RNA(n) + a ribonucleoside 5'-triphosphate = RNA(n+1) + diphosphate. Its function is as follows. DNA-dependent RNA polymerase catalyzes the transcription of DNA into RNA using the four ribonucleoside triphosphates as substrates. This chain is DNA-directed RNA polymerase subunit beta', found in Variovorax paradoxus (strain S110).